Here is an 86-residue protein sequence, read N- to C-terminus: Putative membrane protein insertion efficiency factor (86 aa).

A disordered region spans residues 66–86; that stretch reads FSKGGFDPVPPHDGVPGKKED.

Belongs to the UPF0161 family.

The protein resides in the cell inner membrane. Could be involved in insertion of integral membrane proteins into the membrane. This is Putative membrane protein insertion efficiency factor from Chlorobium luteolum (strain DSM 273 / BCRC 81028 / 2530) (Pelodictyon luteolum).